The sequence spans 304 residues: tRNA pseudouridine synthase B (304 aa).

Asp-47 serves as the catalytic Nucleophile. Residues 85-105 are disordered; the sequence is TNTDDGEGEVTETSDARPSDD.

It belongs to the pseudouridine synthase TruB family. Type 1 subfamily.

It catalyses the reaction uridine(55) in tRNA = pseudouridine(55) in tRNA. Its function is as follows. Responsible for synthesis of pseudouridine from uracil-55 in the psi GC loop of transfer RNAs. This is tRNA pseudouridine synthase B from Dinoroseobacter shibae (strain DSM 16493 / NCIMB 14021 / DFL 12).